A 261-amino-acid chain; its full sequence is Hemin import ATP-binding protein HmuV (261 aa).

An ABC transporter domain is found at 3-243 (LQAQDLSVDR…ANLRRVYGVE (241 aa)). Residue 35–42 (GANGAGKS) coordinates ATP.

It belongs to the ABC transporter superfamily. Heme (hemin) importer (TC 3.A.1.14.5) family. In terms of assembly, the complex is composed of two ATP-binding proteins (HmuV), two transmembrane proteins (HmuU) and a solute-binding protein (HmuT).

The protein localises to the cell inner membrane. Functionally, part of the ABC transporter complex HmuTUV involved in hemin import. Responsible for energy coupling to the transport system. The sequence is that of Hemin import ATP-binding protein HmuV from Bordetella avium (strain 197N).